A 315-amino-acid polypeptide reads, in one-letter code: Ectopic P granules protein 4 (315 aa).

6 helical membrane-spanning segments follow: residues 84-104, 113-133, 146-166, 190-210, 221-241, and 242-262; these read IGFL…FSFF, IGYI…ALWF, LPPP…ISAL, IVYL…FFDG, IFES…LACS, and ISSN…FFII.

It belongs to the EI24 family. As to expression, expressed in pharyngeal and body wall muscles and intestine cells.

The protein localises to the cytoplasm. The protein resides in the membrane. In terms of biological role, involved in autophagy. Thought to act in autophagasome and omegasome formation. In Caenorhabditis elegans, this protein is Ectopic P granules protein 4.